The chain runs to 164 residues: Large ribosomal subunit protein uL10 (164 aa).

It belongs to the universal ribosomal protein uL10 family. In terms of assembly, part of the ribosomal stalk of the 50S ribosomal subunit. The N-terminus interacts with L11 and the large rRNA to form the base of the stalk. The C-terminus forms an elongated spine to which L12 dimers bind in a sequential fashion forming a multimeric L10(L12)X complex.

Forms part of the ribosomal stalk, playing a central role in the interaction of the ribosome with GTP-bound translation factors. The protein is Large ribosomal subunit protein uL10 of Chromobacterium violaceum (strain ATCC 12472 / DSM 30191 / JCM 1249 / CCUG 213 / NBRC 12614 / NCIMB 9131 / NCTC 9757 / MK).